Consider the following 255-residue polypeptide: Homeobox protein Hox-D4 (255 aa).

Residues 31 to 127 (EQGADYYGGG…PKQPPSGTAL (97 aa)) are disordered. Pro residues predominate over residues 94 to 107 (EPCPAPPAPPPAPL). Positions 133–138 (VYPWMK) match the Antp-type hexapeptide motif. The segment at residues 154–213 (PKRSRTAYTRQQVLELEKEFHFNRYLTRRRRIEIAHTLCLSERQIKIWFQNRRMKWKKDH) is a DNA-binding region (homeobox). The tract at residues 212–255 (DHKLPNTKGRSSSSSSSSSCSSSVAPSQHLQPMAKDHHTDLTTL) is disordered. Low complexity predominate over residues 222 to 234 (SSSSSSSSSCSSS). Basic and acidic residues predominate over residues 245-255 (AKDHHTDLTTL).

This sequence belongs to the Antp homeobox family. Deformed subfamily. In terms of assembly, forms a DNA-binding heterodimer with transcription factor PBX1.

Its subcellular location is the nucleus. In terms of biological role, sequence-specific transcription factor which is part of a developmental regulatory system that provides cells with specific positional identities on the anterior-posterior axis. This Homo sapiens (Human) protein is Homeobox protein Hox-D4 (HOXD4).